A 506-amino-acid polypeptide reads, in one-letter code: Trans-cinnamate 4-monooxygenase (506 aa).

The chain crosses the membrane as a helical span at residues 3–23 (LLLLEKALLGLFAAAVVAIAV). Residues 213-218 (RSRLAQ) and Ala306 contribute to the (E)-cinnamate site. Heme is bound at residue Cys447.

This sequence belongs to the cytochrome P450 family. Heme serves as cofactor.

It is found in the membrane. It catalyses the reaction (E)-cinnamate + reduced [NADPH--hemoprotein reductase] + O2 = (E)-4-coumarate + oxidized [NADPH--hemoprotein reductase] + H2O + H(+). It participates in phenylpropanoid metabolism; trans-4-coumarate biosynthesis; trans-4-coumarate from trans-cinnamate: step 1/1. In terms of biological role, catalyzes the first oxidative step of the phenylpropanoid pathway in higher plants by transforming trans-cinnamate into p-coumarate. The compounds formed by this pathway are essential components for lignification, pollination, and defense against ultraviolet light, predators and pathogens. This chain is Trans-cinnamate 4-monooxygenase (CYP73A2), found in Ruta graveolens (Common rue).